The sequence spans 599 residues: Aspartate--tRNA(Asp/Asn) ligase (599 aa).

Glu172 serves as a coordination point for L-aspartate. The segment at 196–199 (QLFK) is aspartate. Arg218 serves as a coordination point for L-aspartate. ATP contacts are provided by residues 218–220 (RDE) and Gln227. His451 provides a ligand contact to L-aspartate. Glu485 contacts ATP. L-aspartate is bound at residue Arg492. Position 537–540 (537–540 (GLDR)) interacts with ATP.

This sequence belongs to the class-II aminoacyl-tRNA synthetase family. Type 1 subfamily. In terms of assembly, homodimer.

The protein localises to the cytoplasm. It catalyses the reaction tRNA(Asx) + L-aspartate + ATP = L-aspartyl-tRNA(Asx) + AMP + diphosphate. Functionally, aspartyl-tRNA synthetase with relaxed tRNA specificity since it is able to aspartylate not only its cognate tRNA(Asp) but also tRNA(Asn). Reaction proceeds in two steps: L-aspartate is first activated by ATP to form Asp-AMP and then transferred to the acceptor end of tRNA(Asp/Asn). This chain is Aspartate--tRNA(Asp/Asn) ligase, found in Dechloromonas aromatica (strain RCB).